We begin with the raw amino-acid sequence, 1714 residues long: uncharacterized protein (1714 aa).

Disordered stretches follow at residues 47–70 and 584–616; these read SVAG…SDDL and KKTG…KSKK. ATP is bound by residues 607–614 and 806–813; these read ATKESGKS and APTSAGKT. Positions 607–616 are enriched in basic and acidic residues; it reads ATKESGKSKK. The Helicase ATP-binding domain occupies 793–963; that stretch reads LDSVDRGNSA…WLNSSEQAKS (171 aa). Residues 913–916 carry the DEVH box motif; the sequence is DEVH. The interval 1197 to 1223 is disordered; that stretch reads KRKRDDAEKKKKGDKDEDAGPEKDDDE. A compositionally biased stretch (basic and acidic residues) spans 1199-1218; sequence KRDDAEKKKKGDKDEDAGPE. The region spanning 1237–1391 is the Helicase C-terminal domain; it reads ALERFKLRGR…NPPFTVLFLL (155 aa).

It belongs to the helicase family. SKI2 subfamily.

The protein localises to the nucleus. This is an uncharacterized protein from Caenorhabditis elegans.